We begin with the raw amino-acid sequence, 198 residues long: Peptidyl-tRNA hydrolase (198 aa).

TRNA is bound at residue Y14. H19 acts as the Proton acceptor in catalysis. Positions 64, 66, and 113 each coordinate tRNA.

The protein belongs to the PTH family. In terms of assembly, monomer.

The protein localises to the cytoplasm. The enzyme catalyses an N-acyl-L-alpha-aminoacyl-tRNA + H2O = an N-acyl-L-amino acid + a tRNA + H(+). Functionally, hydrolyzes ribosome-free peptidyl-tRNAs (with 1 or more amino acids incorporated), which drop off the ribosome during protein synthesis, or as a result of ribosome stalling. Catalyzes the release of premature peptidyl moieties from peptidyl-tRNA molecules trapped in stalled 50S ribosomal subunits, and thus maintains levels of free tRNAs and 50S ribosomes. The sequence is that of Peptidyl-tRNA hydrolase from Acidobacterium capsulatum (strain ATCC 51196 / DSM 11244 / BCRC 80197 / JCM 7670 / NBRC 15755 / NCIMB 13165 / 161).